The chain runs to 197 residues: Casparian strip membrane protein 4 (197 aa).

Residues 1–34 lie on the Cytoplasmic side of the membrane; that stretch reads MMSSTTIDVPAESSNVAKGKAVLVAAPRPGGWKK. The helical transmembrane segment at 35–55 threads the bilayer; that stretch reads GIAIVDFVLRLGAVAAALGAA. At 56 to 85 the chain is on the extracellular side; the sequence is TTMATADQTLPFFTQFFQFEASYDSFTTFQ. Residues 86-106 form a helical membrane-spanning segment; it reads FFVITMALVGCYLVLSLPLSI. Residues 107-118 lie on the Cytoplasmic side of the membrane; the sequence is VSIIRPHALGPK. Residues 119 to 139 form a helical membrane-spanning segment; the sequence is LFLIILDTVFLTLATASAASA. The Extracellular segment spans residues 140–171; that stretch reads AAVVYVAHNGNQDSNWLAICNQFGDFCAQTSG. The chain crosses the membrane as a helical span at residues 172-192; that stretch reads AVVSSLVAVVVFVLLIVMSAL. The Cytoplasmic segment spans residues 193–197; that stretch reads ALGKH.

It belongs to the Casparian strip membrane proteins (CASP) family. Homodimer and heterodimers.

The protein resides in the cell membrane. Functionally, regulates membrane-cell wall junctions and localized cell wall deposition. Required for establishment of the Casparian strip membrane domain (CSD) and the subsequent formation of Casparian strips, a cell wall modification of the root endodermis that determines an apoplastic barrier between the intraorganismal apoplasm and the extraorganismal apoplasm and prevents lateral diffusion. The chain is Casparian strip membrane protein 4 from Lotus japonicus (Lotus corniculatus var. japonicus).